We begin with the raw amino-acid sequence, 721 residues long: Ribonucleoside-diphosphate reductase subunit alpha (721 aa).

Residues T159, 175–176, G204, 384–388, and 589–593 each bind substrate; these read SC, NLCSE, and PTGSI. Residues C176 and C413 are joined by a disulfide bond. The Proton acceptor role is filled by N384. The Cysteine radical intermediate role is filled by C386. E388 acts as the Proton acceptor in catalysis.

It belongs to the ribonucleoside diphosphate reductase large chain family. In terms of assembly, tetramer of two alpha and two beta subunits.

The catalysed reaction is a 2'-deoxyribonucleoside 5'-diphosphate + [thioredoxin]-disulfide + H2O = a ribonucleoside 5'-diphosphate + [thioredoxin]-dithiol. Its activity is regulated as follows. Under complex allosteric control mediated by deoxynucleoside triphosphates and ATP binding. The type of nucleotide bound at the specificity site determines substrate preference. It seems probable that ATP makes the enzyme reduce CDP and UDP, dGTP favors ADP reduction and dTTP favors GDP reduction. In terms of biological role, provides the precursors necessary for DNA synthesis. Catalyzes the biosynthesis of deoxyribonucleotides from the corresponding ribonucleotides. In Mycoplasma pneumoniae (strain ATCC 29342 / M129 / Subtype 1) (Mycoplasmoides pneumoniae), this protein is Ribonucleoside-diphosphate reductase subunit alpha (nrdE).